The primary structure comprises 223 residues: SCMKAAPMKEVSIRGQGSLAYPGLRTQGNLETLSGPNDATRGLTSLADTFEHVIEELLDEQQVIQPSKENKDADLYSTRVMLSSQVPLEPPLLFLLEEYKNYLDAANMSMRVRRHSDPARRGELSVCDSTSEWVTAAEKKTAVDMSGATVTVLEKVPVPKGQLKQYFYETKCSSKGYAKEGCRGIDKRYWNSQCRTTQSFVRALTMDNKKRVGWRFIRIDTSC.

The N-terminal stretch at 1–5 (SCMKA) is a signal peptide. A propeptide spanning residues 6 to 114 (APMKEVSIRG…AANMSMRVRR (109 aa)) is cleaved from the precursor. A glycan (N-linked (GlcNAc...) asparagine) is linked at N107. 2 disulfides stabilise this stretch: C127-C194 and C172-C223.

This sequence belongs to the NGF-beta family.

The protein localises to the secreted. Functionally, promotes the survival of neuronal populations that are all located either in the central nervous system or directly connected to it. This is Neurotrophic factor BDNF precursor form (BDNF) from Candoia carinata (Papuan tree boa).